Consider the following 139-residue polypeptide: Arsenate reductase (139 aa).

Residues C10, C82, and C89 each act as nucleophile in the active site. 2 disulfides stabilise this stretch: C10–C82 and C82–C89.

Belongs to the low molecular weight phosphotyrosine protein phosphatase family. Thioredoxin-coupled ArsC subfamily.

The protein localises to the cytoplasm. It catalyses the reaction arsenate + [thioredoxin]-dithiol + H(+) = arsenite + [thioredoxin]-disulfide + H2O. Functionally, catalyzes the reduction of arsenate [As(V)] to arsenite [As(III)]. The polypeptide is Arsenate reductase (Bacillus licheniformis (strain ATCC 14580 / DSM 13 / JCM 2505 / CCUG 7422 / NBRC 12200 / NCIMB 9375 / NCTC 10341 / NRRL NRS-1264 / Gibson 46)).